The chain runs to 633 residues: Transcriptional repressor p66-alpha (633 aa).

Positions 1–18 (MTEEACRTRSQKRALERD) are enriched in basic and acidic residues. 2 disordered regions span residues 1–59 (MTEE…PTQG) and 73–119 (RGEG…RVNG). 2 positions are modified to phosphothreonine: Thr20 and Thr49. The segment covering 86–99 (RTSHSDMKSERRPP) has biased composition (basic and acidic residues). A Glycyl lysine isopeptide (Lys-Gly) (interchain with G-Cter in SUMO2) cross-link involves residue Lys93. Phosphoserine is present on residues Ser100, Ser107, Ser113, Ser114, and Ser137. Residues 108–119 (DNEQPSSPRVNG) are compositionally biased toward polar residues. The stretch at 139 to 174 (EERERMIKQLKEELRLEEAKLVLLKKLRQSQIQKEA) forms a coiled coil. The tract at residues 144–178 (MIKQLKEELRLEEAKLVLLKKLRQSQIQKEATAQK) is CR1; interaction with HDAC1, HDAC2, MBD2 and MTA2. Over residues 172-188 (KEATAQKPTGSVGSTVT) the composition is skewed to polar residues. A disordered region spans residues 172-238 (KEATAQKPTG…QASSKLGPQA (67 aa)). Lys178 participates in a covalent cross-link: Glycyl lysine isopeptide (Lys-Gly) (interchain with G-Cter in SUMO2). The segment at 181–295 (GSVGSTVTTP…IIQQGLIRVA (115 aa)) is interaction with ZMYND8. A Phosphothreonine modification is found at Thr189. Residues 196–212 (GTQNIPAGKPSLQTSSA) show a composition bias toward polar residues. Lys204 is covalently cross-linked (Glycyl lysine isopeptide (Lys-Gly) (interchain with G-Cter in SUMO2)). An Omega-N-methylarginine modification is found at Arg225. A compositionally biased stretch (polar residues) spans 228–238 (QQASSKLGPQA). A Glycyl lysine isopeptide (Lys-Gly) (interchain with G-Cter in SUMO2) cross-link involves residue Lys233. Residues Arg249, Arg258, and Arg273 each carry the omega-N-methylarginine modification. A Phosphoserine modification is found at Ser275. Arg285 carries the omega-N-methylarginine modification. Phosphoserine is present on residues Ser340 and Ser343. The segment at 340–480 (SPASRQAAAK…EIEQRLLQQG (141 aa)) is CR2; histone tail-binding and interaction with CHD4 and CDK2AP1. The GATA-type zinc-finger motif lies at 411 to 464 (SREPYMCAQCKTDFTCRWREEKSGAIMCENCMTTNQKKALKVEHTSRLKAAFVK). Residues Lys464 and Lys487 each participate in a glycyl lysine isopeptide (Lys-Gly) (interchain with G-Cter in SUMO2) cross-link. Position 512 is a phosphoserine (Ser512). Position 539 is an asymmetric dimethylarginine; alternate (Arg539). Position 539 is an omega-N-methylarginine; alternate (Arg539). Ser546 and Ser548 each carry phosphoserine. Residue Lys550 forms a Glycyl lysine isopeptide (Lys-Gly) (interchain with G-Cter in SUMO2) linkage. Position 556 is a phosphoserine (Ser556). The interval 561 to 585 (VSRTGRHSERTVSAGKGSATSNWKK) is disordered. Residue Lys585 forms a Glycyl lysine isopeptide (Lys-Gly) (interchain with G-Cter in SUMO2) linkage. Position 598 is a phosphoserine (Ser598). A Glycyl lysine isopeptide (Lys-Gly) (interchain with G-Cter in SUMO2) cross-link involves residue Lys605.

As to quaternary structure, homooligomer. Component of the nucleosome remodeling and deacetylase (NuRD) repressor complex, composed of core proteins MTA1, MTA2, MTA3, RBBP4, RBBP7, HDAC1, HDAC2, MBD2, MBD3, and peripherally associated proteins CDK2AP1, CDK2AP2, GATAD2A, GATAD2B, CHD3, CHD4 and CHD5. The exact stoichiometry of the NuRD complex is unknown, and some subunits such as MBD2 and MBD3, GATAD2A and GATAD2B, and CHD3, CHD4 and CHD5 define mutually exclusive NuRD complexes. Component of the MeCP1 histone deacetylase complex. Interacts with CDK2AP1. Interacts with CHD4. Interacts with ERCC6. Interacts with HDAC1. Interacts with HDAC2. Interacts with MBD2; this interaction is required for the enhancement of MBD2-mediated repression and for targeting to the chromatin. Interacts with MBD3. Interacts with MTA2. Interacts with ZMYND8. Interacts with histone tails, including that of histones H2A, H2B, H3 and H4, the interaction is reduced by histone acetylation. Ubiquitous, both in fetal and adult tissues.

The protein localises to the nucleus speckle. Its subcellular location is the nucleus. It is found in the chromosome. Functionally, transcriptional repressor. Acts as a component of the histone deacetylase NuRD complex which participates in the remodeling of chromatin. Enhances MBD2-mediated repression. Efficient repression requires the presence of GATAD2B. This Homo sapiens (Human) protein is Transcriptional repressor p66-alpha (GATAD2A).